Here is a 475-residue protein sequence, read N- to C-terminus: ATP synthase subunit beta 1 (475 aa).

152–159 (GGAGVGKT) is a binding site for ATP.

Belongs to the ATPase alpha/beta chains family. F-type ATPases have 2 components, CF(1) - the catalytic core - and CF(0) - the membrane proton channel. CF(1) has five subunits: alpha(3), beta(3), gamma(1), delta(1), epsilon(1). CF(0) has four main subunits: a(1), b(1), b'(1) and c(9-12).

The protein localises to the cell inner membrane. The catalysed reaction is ATP + H2O + 4 H(+)(in) = ADP + phosphate + 5 H(+)(out). Produces ATP from ADP in the presence of a proton gradient across the membrane. The catalytic sites are hosted primarily by the beta subunits. The chain is ATP synthase subunit beta 1 from Cereibacter sphaeroides (strain ATCC 17029 / ATH 2.4.9) (Rhodobacter sphaeroides).